The sequence spans 454 residues: Bleomycin hydrolase (454 aa).

N-acetylmethionine is present on Met-1. Active-site residues include Cys-73 and His-372. An N6-acetyllysine modification is found at Lys-391. The active site involves Asn-396.

The protein belongs to the peptidase C1 family. Homohexamer. Interacts with NUDT12 (via ANK repeats). In terms of tissue distribution, expressed at relatively higher levels in the stomach, esophagus, spleen, thymus and testis, and at lower levels in the skin, lung and skeletal muscle.

The protein resides in the cytoplasm. The protein localises to the cytoplasmic granule. It carries out the reaction Inactivates bleomycin B2 (a cytotoxic glycometallopeptide) by hydrolysis of a carboxyamide bond of beta-aminoalanine, but also shows general aminopeptidase activity. The specificity varies somewhat with source, but amino acid arylamides of Met, Leu and Ala are preferred.. The normal physiological role of BLM hydrolase is unknown, but it catalyzes the inactivation of the antitumor drug BLM (a glycopeptide) by hydrolyzing the carboxamide bond of its B-aminoalaninamide moiety thus protecting normal and malignant cells from BLM toxicity. Binds single-stranded DNA with higher affinity than double-stranded DNA. May play an important role in the metabolism of antibiotics. The chain is Bleomycin hydrolase (Blmh) from Rattus norvegicus (Rat).